A 408-amino-acid polypeptide reads, in one-letter code: Phosphoglycerate kinase (408 aa).

Substrate-binding positions include 24–26, Arg-39, 62–65, Arg-121, and Arg-161; these read DLN and HLGR. ATP is bound by residues Lys-211, Gly-307, Glu-338, and 364 to 367; that span reads GGDS.

It belongs to the phosphoglycerate kinase family. As to quaternary structure, monomer.

The protein resides in the cytoplasm. The enzyme catalyses (2R)-3-phosphoglycerate + ATP = (2R)-3-phospho-glyceroyl phosphate + ADP. It participates in carbohydrate degradation; glycolysis; pyruvate from D-glyceraldehyde 3-phosphate: step 2/5. The polypeptide is Phosphoglycerate kinase (Arthrobacter sp. (strain FB24)).